We begin with the raw amino-acid sequence, 250 residues long: Undecaprenyl-diphosphatase (250 aa).

7 consecutive transmembrane segments (helical) span residues 35–55 (DLSV…IFVG), 73–93 (INLT…GVLL), 100–120 (SLSN…ALLI), 146–166 (ALAI…SLLI), 171–191 (EIAL…AGLL), 200–220 (SYSI…LFIL), and 229–249 (LKIF…LGGI).

It belongs to the UppP family.

The protein localises to the cell inner membrane. It catalyses the reaction di-trans,octa-cis-undecaprenyl diphosphate + H2O = di-trans,octa-cis-undecaprenyl phosphate + phosphate + H(+). Catalyzes the dephosphorylation of undecaprenyl diphosphate (UPP). Confers resistance to bacitracin. This Thermosipho melanesiensis (strain DSM 12029 / CIP 104789 / BI429) protein is Undecaprenyl-diphosphatase.